The chain runs to 336 residues: 4-hydroxy-3-methylbut-2-enyl diphosphate reductase (336 aa).

Cys32 is a [4Fe-4S] cluster binding site. Positions 61 and 94 each coordinate (2E)-4-hydroxy-3-methylbut-2-enyl diphosphate. Dimethylallyl diphosphate-binding residues include His61 and His94. The isopentenyl diphosphate site is built by His61 and His94. A [4Fe-4S] cluster-binding site is contributed by Cys116. (2E)-4-hydroxy-3-methylbut-2-enyl diphosphate is bound at residue His148. His148 is a binding site for dimethylallyl diphosphate. His148 is a binding site for isopentenyl diphosphate. The active-site Proton donor is the Glu150. Residue Thr189 coordinates (2E)-4-hydroxy-3-methylbut-2-enyl diphosphate. A [4Fe-4S] cluster-binding site is contributed by Cys219. 4 residues coordinate (2E)-4-hydroxy-3-methylbut-2-enyl diphosphate: Ser247, Ser248, Asn249, and Ser292. Positions 247, 248, 249, and 292 each coordinate dimethylallyl diphosphate. Isopentenyl diphosphate-binding residues include Ser247, Ser248, Asn249, and Ser292.

It belongs to the IspH family. [4Fe-4S] cluster serves as cofactor.

It catalyses the reaction isopentenyl diphosphate + 2 oxidized [2Fe-2S]-[ferredoxin] + H2O = (2E)-4-hydroxy-3-methylbut-2-enyl diphosphate + 2 reduced [2Fe-2S]-[ferredoxin] + 2 H(+). The catalysed reaction is dimethylallyl diphosphate + 2 oxidized [2Fe-2S]-[ferredoxin] + H2O = (2E)-4-hydroxy-3-methylbut-2-enyl diphosphate + 2 reduced [2Fe-2S]-[ferredoxin] + 2 H(+). It participates in isoprenoid biosynthesis; dimethylallyl diphosphate biosynthesis; dimethylallyl diphosphate from (2E)-4-hydroxy-3-methylbutenyl diphosphate: step 1/1. Its pathway is isoprenoid biosynthesis; isopentenyl diphosphate biosynthesis via DXP pathway; isopentenyl diphosphate from 1-deoxy-D-xylulose 5-phosphate: step 6/6. Functionally, catalyzes the conversion of 1-hydroxy-2-methyl-2-(E)-butenyl 4-diphosphate (HMBPP) into a mixture of isopentenyl diphosphate (IPP) and dimethylallyl diphosphate (DMAPP). Acts in the terminal step of the DOXP/MEP pathway for isoprenoid precursor biosynthesis. This chain is 4-hydroxy-3-methylbut-2-enyl diphosphate reductase, found in Gluconobacter oxydans (strain 621H) (Gluconobacter suboxydans).